The primary structure comprises 3073 residues: Adhesion G-protein coupled receptor G4 (3073 aa).

The first 25 residues, 1–25 (MRKHILHQRLCGLILVSSFIFLTDS), serve as a signal peptide directing secretion. Topologically, residues 26–2691 (LSLKGKRLDF…RSTVDAVNER (2666 aa)) are extracellular. A Pentraxin (PTX) domain is found at 29-228 (KGKRLDFYGE…SPTVDRRLRC (200 aa)). Cystine bridges form between Cys58-Cys123 and Cys200-Cys228. A glycan (N-linked (GlcNAc...) asparagine) is linked at Asn233. Residues 253–272 (SQTTGLNPHKTSHSSTLLPE) form a disordered region. N-linked (GlcNAc...) asparagine glycosylation is present at Asn662. Composition is skewed to polar residues over residues 671–696 (GNAT…ESKV) and 929–951 (GNSA…SSST). Disordered stretches follow at residues 671 to 697 (GNAT…SKVT) and 924 to 951 (SEKS…SSST). N-linked (GlcNAc...) asparagine glycans are attached at residues Asn1141, Asn1304, and Asn1495. 3 disordered regions span residues 1565-1595 (FTSS…AGPT), 1741-1760 (TLTN…STPT), and 1945-1972 (ITLS…SDSR). Polar residues predominate over residues 1945–1954 (ITLSSNPSVN). A compositionally biased stretch (low complexity) spans 1955–1972 (SRATSPTWSSSSLPSDSR). Residues 2535–2684 (SSEEVIAPQI…GVLMDLSRST (150 aa)) enclose the GAIN-B domain. 2 disulfides stabilise this stretch: Cys2635–Cys2666 and Cys2654–Cys2668. Residues 2635–2684 (CAFWDFDTNNGLGGWNPSGCKLKESNINYTICQCNHLTHFGVLMDLSRST) form a GPS region. The interval 2673-2684 (HFGVLMDLSRST) is stachel. The chain crosses the membrane as a helical span at residues 2692 to 2712 (ILVIITYTGCGISSIFLGIAM). Residues 2713-2728 (VTYIAFHKLRKDYPSK) lie on the Cytoplasmic side of the membrane. The chain crosses the membrane as a helical span at residues 2729 to 2749 (ILINLCTALLMLNLAFLVNSW). Residues 2750–2755 (LTSFQK) are Extracellular-facing. The helical transmembrane segment at 2756–2776 (VGLCITAAVALHYFLLVSLTW) threads the bilayer. Cys2759 and Cys2836 are joined by a disulfide. Residues 2777–2798 (MGLEAVHMYFALVKVFNTYIPN) are Cytoplasmic-facing. Residues 2799 to 2819 (YILKFCLAGWGIPAITVAIIL) traverse the membrane as a helical segment. Over 2820 to 2842 (SVRKDLYGTLSPTTPFCWIKDDH) the chain is Extracellular. A helical transmembrane segment spans residues 2843 to 2863 (IFYISVVAYFCLIFLMNLSMF). Residues 2864-2892 (CTVLVQLTSVKSQSQKTRKKMILNDLKGT) are Cytoplasmic-facing. A helical transmembrane segment spans residues 2893 to 2913 (ISLTFLLGLTWGFAFFAWGPV). Arg2914 is a topological domain (extracellular). The helical transmembrane segment at 2915 to 2935 (IFFLYLFAICNTLQGFLIFVF) threads the bilayer. The Cytoplasmic segment spans residues 2936–3073 (YCVMKESVRE…SSGLGEMFNL (138 aa)).

The protein belongs to the G-protein coupled receptor 2 family. Adhesion G-protein coupled receptor (ADGR) subfamily. In terms of assembly, homodimer; homodimerizes via its Pentraxin domain in a calcium-independent manner. Heterodimer of 2 chains generated by proteolytic processing; the large extracellular N-terminal fragment and the membrane-bound C-terminal fragment predominantly remain associated and non-covalently linked. Post-translationally, autoproteolytically processed at the GPS region of the GAIN-B domain; this cleavage modulates receptor activity.

Its subcellular location is the membrane. Its activity is regulated as follows. Forms a heterodimer of 2 chains generated by proteolytic processing that remain associated through non-covalent interactions mediated by the GAIN-B domain. In the inactivated receptor, the Stachel sequence (also named stalk) is embedded in the GAIN-B domain, where it adopts a beta-strand conformation. On activation, the Stachel moves into the 7 transmembrane region and adopts a twisted hook-shaped configuration that forms contacts within the receptor, leading to coupling of a G-alpha protein, which activates signaling. The cleaved GAIN-B and N-terminal domains can then dissociate from the rest of the receptor. Orphan adhesion G-protein coupled receptor (aGPCR). Ligand binding causes a conformation change that triggers signaling via guanine nucleotide-binding proteins (G proteins) and modulates the activity of downstream effectors, such as adenylate cyclase. ADGRG4 is coupled to G(s) G proteins and mediates activation of adenylate cyclase activity. May be act as sensor of mechanical forces. This Mus musculus (Mouse) protein is Adhesion G-protein coupled receptor G4.